Reading from the N-terminus, the 125-residue chain is S-adenosylmethionine decarboxylase proenzyme (125 aa).

The Schiff-base intermediate with substrate; via pyruvic acid role is filled by Ser-63. Ser-63 is subject to Pyruvic acid (Ser); by autocatalysis. The active-site Proton acceptor; for processing activity is His-68. Cys-83 functions as the Proton donor; for catalytic activity in the catalytic mechanism.

Belongs to the prokaryotic AdoMetDC family. Type 1 subfamily. Heterotetramer of two alpha and two beta chains arranged as a dimer of alpha/beta heterodimers. Pyruvate is required as a cofactor. In terms of processing, is synthesized initially as an inactive proenzyme. Formation of the active enzyme involves a self-maturation process in which the active site pyruvoyl group is generated from an internal serine residue via an autocatalytic post-translational modification. Two non-identical subunits are generated from the proenzyme in this reaction, and the pyruvate is formed at the N-terminus of the alpha chain, which is derived from the carboxyl end of the proenzyme. The post-translation cleavage follows an unusual pathway, termed non-hydrolytic serinolysis, in which the side chain hydroxyl group of the serine supplies its oxygen atom to form the C-terminus of the beta chain, while the remainder of the serine residue undergoes an oxidative deamination to produce ammonia and the pyruvoyl group blocking the N-terminus of the alpha chain.

It carries out the reaction S-adenosyl-L-methionine + H(+) = S-adenosyl 3-(methylsulfanyl)propylamine + CO2. It functions in the pathway amine and polyamine biosynthesis; S-adenosylmethioninamine biosynthesis; S-adenosylmethioninamine from S-adenosyl-L-methionine: step 1/1. Functionally, catalyzes the decarboxylation of S-adenosylmethionine to S-adenosylmethioninamine (dcAdoMet), the propylamine donor required for the synthesis of the polyamines spermine and spermidine from the diamine putrescine. The polypeptide is S-adenosylmethionine decarboxylase proenzyme (Moorella thermoacetica (strain ATCC 39073 / JCM 9320)).